The sequence spans 95 residues: Putative regulatory protein Pmob_0099 (95 aa).

The protein belongs to the RemA family.

In Petrotoga mobilis (strain DSM 10674 / SJ95), this protein is Putative regulatory protein Pmob_0099.